The chain runs to 450 residues: Phosphoglucosamine mutase (450 aa).

Catalysis depends on Ser-97, which acts as the Phosphoserine intermediate. The Mg(2+) site is built by Ser-97, Asp-236, Asp-238, and Asp-240. Residue Ser-97 is modified to Phosphoserine.

The protein belongs to the phosphohexose mutase family. The cofactor is Mg(2+). Post-translationally, activated by phosphorylation.

It catalyses the reaction alpha-D-glucosamine 1-phosphate = D-glucosamine 6-phosphate. Functionally, catalyzes the conversion of glucosamine-6-phosphate to glucosamine-1-phosphate. This is Phosphoglucosamine mutase from Prochlorococcus marinus (strain MIT 9215).